A 274-amino-acid polypeptide reads, in one-letter code: Large ribosomal subunit protein uL2 (274 aa).

Positions 221 to 274 are disordered; that stretch reads RGTAMNPVDHPHGGGEGKNFGKHPVTPWGVQTKGKKTRSNKRTDKFIVRRRSKK.

The protein belongs to the universal ribosomal protein uL2 family. In terms of assembly, part of the 50S ribosomal subunit. Forms a bridge to the 30S subunit in the 70S ribosome.

Its function is as follows. One of the primary rRNA binding proteins. Required for association of the 30S and 50S subunits to form the 70S ribosome, for tRNA binding and peptide bond formation. It has been suggested to have peptidyltransferase activity; this is somewhat controversial. Makes several contacts with the 16S rRNA in the 70S ribosome. This is Large ribosomal subunit protein uL2 from Serratia proteamaculans (strain 568).